The primary structure comprises 1215 residues: DNA-directed RNA polymerase subunit beta' (1215 aa).

Residues Cys-60, Cys-62, Cys-75, and Cys-78 each contribute to the Zn(2+) site. 3 residues coordinate Mg(2+): Asp-450, Asp-452, and Asp-454. Zn(2+) contacts are provided by Cys-818, Cys-892, Cys-899, and Cys-902.

The protein belongs to the RNA polymerase beta' chain family. In terms of assembly, the RNAP catalytic core consists of 2 alpha, 1 beta, 1 beta' and 1 omega subunit. When a sigma factor is associated with the core the holoenzyme is formed, which can initiate transcription. It depends on Mg(2+) as a cofactor. Zn(2+) serves as cofactor.

The enzyme catalyses RNA(n) + a ribonucleoside 5'-triphosphate = RNA(n+1) + diphosphate. DNA-dependent RNA polymerase catalyzes the transcription of DNA into RNA using the four ribonucleoside triphosphates as substrates. This chain is DNA-directed RNA polymerase subunit beta', found in Streptococcus sanguinis (strain SK36).